Reading from the N-terminus, the 666-residue chain is tRNA 5-methylaminomethyl-2-thiouridine biosynthesis bifunctional protein MnmC (666 aa).

The tRNA (mnm(5)s(2)U34)-methyltransferase stretch occupies residues 1–253 (MSSPFAPIIT…KRHMLCAYYE (253 aa)). The interval 283–666 (VGGGLAGCFI…FLRKKIIQGP (384 aa)) is FAD-dependent cmnm(5)s(2)U34 oxidoreductase.

In the N-terminal section; belongs to the methyltransferase superfamily. tRNA (mnm(5)s(2)U34)-methyltransferase family. It in the C-terminal section; belongs to the DAO family. FAD serves as cofactor.

The protein resides in the cytoplasm. It catalyses the reaction 5-aminomethyl-2-thiouridine(34) in tRNA + S-adenosyl-L-methionine = 5-methylaminomethyl-2-thiouridine(34) in tRNA + S-adenosyl-L-homocysteine + H(+). Functionally, catalyzes the last two steps in the biosynthesis of 5-methylaminomethyl-2-thiouridine (mnm(5)s(2)U) at the wobble position (U34) in tRNA. Catalyzes the FAD-dependent demodification of cmnm(5)s(2)U34 to nm(5)s(2)U34, followed by the transfer of a methyl group from S-adenosyl-L-methionine to nm(5)s(2)U34, to form mnm(5)s(2)U34. In Legionella pneumophila (strain Corby), this protein is tRNA 5-methylaminomethyl-2-thiouridine biosynthesis bifunctional protein MnmC.